The sequence spans 488 residues: GTPase Der (488 aa).

EngA-type G domains follow at residues 3–166 and 201–374; these read PVVA…VSDG and IKLA…QCAT. GTP is bound by residues 9 to 16, 56 to 60, 118 to 121, 207 to 214, 254 to 258, and 319 to 322; these read GRPNVGKS, DTGGI, NKTD, DTAGV, and NKWD. Residues 375 to 459 enclose the KH-like domain; the sequence is KRVSTALLTR…PIRIQFNEGA (85 aa).

The protein belongs to the TRAFAC class TrmE-Era-EngA-EngB-Septin-like GTPase superfamily. EngA (Der) GTPase family. As to quaternary structure, associates with the 50S ribosomal subunit.

Functionally, GTPase that plays an essential role in the late steps of ribosome biogenesis. In Sodalis glossinidius (strain morsitans), this protein is GTPase Der.